Reading from the N-terminus, the 425-residue chain is Beta-1,4-galactosyltransferase galt-1 (425 aa).

Residues 1-8 are Cytoplasmic-facing; that stretch reads MPRITASK. The helical; Signal-anchor for type II membrane protein transmembrane segment at 9–29 threads the bilayer; it reads IVLLIALSFCITVIYHFPIAT. Residues 30–425 lie on the Lumenal side of the membrane; the sequence is RSSKEYDEYG…FDSVVGLLDL (396 aa). 2 N-linked (GlcNAc...) asparagine glycosylation sites follow: asparagine 109 and asparagine 152. Positions 189 to 394 constitute a GT92 domain; the sequence is KMSICVPALF…LLRVYHYKDK (206 aa).

Belongs to the glycosyltransferase 92 family. Requires Mn(2+) as cofactor. N-glycosylated. Expressed in intestine and coelomocytes.

Its subcellular location is the golgi apparatus. The protein resides in the golgi stack membrane. With respect to regulation, inhibited by EDTA, Cu(2+) and Zn(2+). Catalyzes the transfer of beta-galactose from UDP-galactose to position 4 of alpha-1,6-linked fucose at the reducing end GlcNAc in N-glycan cores. Involved in susceptibility to the nematotoxic C.cinerea galectin Cgl2, likely by contributing to the synthesis of core alpha-1,6-fucosylated N-glycans to which Cgl2 binds. The sequence is that of Beta-1,4-galactosyltransferase galt-1 from Caenorhabditis elegans.